We begin with the raw amino-acid sequence, 275 residues long: Elongation factor Ts (275 aa).

The segment at 76 to 79 (TDFV) is involved in Mg(2+) ion dislocation from EF-Tu.

It belongs to the EF-Ts family.

Its subcellular location is the cytoplasm. Functionally, associates with the EF-Tu.GDP complex and induces the exchange of GDP to GTP. It remains bound to the aminoacyl-tRNA.EF-Tu.GTP complex up to the GTP hydrolysis stage on the ribosome. The sequence is that of Elongation factor Ts from Corynebacterium glutamicum (strain ATCC 13032 / DSM 20300 / JCM 1318 / BCRC 11384 / CCUG 27702 / LMG 3730 / NBRC 12168 / NCIMB 10025 / NRRL B-2784 / 534).